The sequence spans 421 residues: 3-isopropylmalate dehydratase large subunit (421 aa).

[4Fe-4S] cluster contacts are provided by cysteine 300, cysteine 360, and cysteine 363.

It belongs to the aconitase/IPM isomerase family. LeuC type 2 subfamily. As to quaternary structure, heterodimer of LeuC and LeuD. It depends on [4Fe-4S] cluster as a cofactor.

The enzyme catalyses (2R,3S)-3-isopropylmalate = (2S)-2-isopropylmalate. The protein operates within amino-acid biosynthesis; L-leucine biosynthesis; L-leucine from 3-methyl-2-oxobutanoate: step 2/4. Functionally, catalyzes the isomerization between 2-isopropylmalate and 3-isopropylmalate, via the formation of 2-isopropylmaleate. This Lachnoclostridium phytofermentans (strain ATCC 700394 / DSM 18823 / ISDg) (Clostridium phytofermentans) protein is 3-isopropylmalate dehydratase large subunit.